Reading from the N-terminus, the 349-residue chain is Protein BPS1, chloroplastic (349 aa).

Residues 1-43 constitute a chloroplast transit peptide; sequence MARPQDPPRGFFPFGNPFKNLSSKNSVLSSKLLPLLNNFETNL.

In terms of tissue distribution, expressed in roots, hypocotyls, cotyledons, leaves, flowers and siliques.

Its subcellular location is the plastid. It is found in the chloroplast. Its function is as follows. Required for normal root and shoot development. Prevents constitutive production of a root mobile carotenoid-derived signaling compound that is capable of arresting shoot and leaf development. The chain is Protein BPS1, chloroplastic from Arabidopsis thaliana (Mouse-ear cress).